The chain runs to 370 residues: Quinolinate synthase (370 aa).

Iminosuccinate is bound by residues H62 and S83. Residue C128 participates in [4Fe-4S] cluster binding. Residues 154–156 (YAN) and S171 each bind iminosuccinate. C215 contacts [4Fe-4S] cluster. Iminosuccinate contacts are provided by residues 241–243 (HPE) and T258. C312 is a [4Fe-4S] cluster binding site.

This sequence belongs to the quinolinate synthase family. Type 1 subfamily. The cofactor is [4Fe-4S] cluster.

Its subcellular location is the cytoplasm. The enzyme catalyses iminosuccinate + dihydroxyacetone phosphate = quinolinate + phosphate + 2 H2O + H(+). It participates in cofactor biosynthesis; NAD(+) biosynthesis; quinolinate from iminoaspartate: step 1/1. Catalyzes the condensation of iminoaspartate with dihydroxyacetone phosphate to form quinolinate. The sequence is that of Quinolinate synthase from Neisseria meningitidis serogroup A / serotype 4A (strain DSM 15465 / Z2491).